The following is a 144-amino-acid chain: Large ribosomal subunit protein uL15 (144 aa).

Positions 20 to 49 (GRGIGSGLGKTGGRGHKGQKSRSGGFHKVG) are disordered. A compositionally biased stretch (gly residues) spans 21–31 (RGIGSGLGKTG).

This sequence belongs to the universal ribosomal protein uL15 family. Part of the 50S ribosomal subunit.

Functionally, binds to the 23S rRNA. The polypeptide is Large ribosomal subunit protein uL15 (Neisseria gonorrhoeae (strain ATCC 700825 / FA 1090)).